A 449-amino-acid chain; its full sequence is Baeyer-Villiger oxidase GME11358 (449 aa).

It belongs to the questin oxidase family.

It participates in secondary metabolite biosynthesis. Functionally, baeyer-Villiger oxidase; part of the gene cluster that mediates the biosynthesis of dibenzodioxocinones such as pestalotiollide B, a novel class of inhibitors against cholesterol ester transfer protein (CEPT). The biosynthesis initiates from condensation of acetate and malonate units catalyzed by the non-reducing PKS pks8/GME11356. Pks8/GME11356 lacks a thioesterase (TE) domain, which is important to the cyclizing of the third ring of atrochrysone carboxylic acid, and the esterase GME11355 might play the role of TE and catalyzes the cyclization reaction of the C ring. The lactamase-like protein GME11357 (or other beta-lactamases in Pestalotiopsis microspora) probably hydrolyzes the thioester bond between the ACP of pks8/GME11356 and the intermediate to release atrochrysone carboxylic acid, which is spontaneously dehydrates to form endocrocin anthrone. Endocrocin anthrone is further converted to emodin via the endocrocin intermediate. Emodin is then oxidized by several enzymes such as the Baeyer-Villiger oxidase GME11358, the oxidoreductase GME11367, the short chain dehydrogenase/reductase GME11373, as well as by other oxidoreductases from the cluster, to modify the A and C rings and open the B ring, and finally yield monodictyphenone. The prenyltransferase GME11375 may catalyze the addition reaction between the C5 side chains and the carbon bone of dibenzodioxocinones. The remaining biochemical reactions to the final product dibenzodioxocinones should be methylation catalyzed by methyltransferase GME11366 and reduction and lactonization reaction catalyzed by a series of oxidordeuctases. This is Baeyer-Villiger oxidase GME11358 from Pestalotiopsis microspora.